The chain runs to 651 residues: Acetyl-coenzyme A synthetase (651 aa).

CoA-binding positions include arginine 190–lysine 193 and threonine 311. Residues glycine 387–proline 389, aspartate 411–threonine 416, aspartate 508, and arginine 523 contribute to the ATP site. Serine 531 contacts CoA. An ATP-binding site is contributed by arginine 534. Valine 545, histidine 547, and valine 550 together coordinate Mg(2+). At lysine 617 the chain carries N6-acetyllysine.

The protein belongs to the ATP-dependent AMP-binding enzyme family. Mg(2+) is required as a cofactor. Post-translationally, acetylated. Deacetylation by the SIR2-homolog deacetylase activates the enzyme.

It catalyses the reaction acetate + ATP + CoA = acetyl-CoA + AMP + diphosphate. Its function is as follows. Catalyzes the conversion of acetate into acetyl-CoA (AcCoA), an essential intermediate at the junction of anabolic and catabolic pathways. AcsA undergoes a two-step reaction. In the first half reaction, AcsA combines acetate with ATP to form acetyl-adenylate (AcAMP) intermediate. In the second half reaction, it can then transfer the acetyl group from AcAMP to the sulfhydryl group of CoA, forming the product AcCoA. This is Acetyl-coenzyme A synthetase from Mycobacterium bovis (strain ATCC BAA-935 / AF2122/97).